Consider the following 322-residue polypeptide: Cytochrome c biogenesis protein CcsA (322 aa).

The next 7 membrane-spanning stretches (helical) occupy residues 9–29 (ILTH…LITL), 43–63 (GMIA…IYSG), 70–90 (LYES…VPKI), 142–162 (MLLS…LLVI), 226–246 (VISL…VWAN), 259–274 (ETWA…IYSH), and 287–307 (AIVA…VNLL).

It belongs to the CcmF/CycK/Ccl1/NrfE/CcsA family. In terms of assembly, may interact with Ccs1.

The protein localises to the plastid. Its subcellular location is the chloroplast thylakoid membrane. Its function is as follows. Required during biogenesis of c-type cytochromes (cytochrome c6 and cytochrome f) at the step of heme attachment. The polypeptide is Cytochrome c biogenesis protein CcsA (Chloranthus spicatus (Chulantree)).